The sequence spans 324 residues: Probable pectinesterase A (324 aa).

An N-terminal signal peptide occupies residues Met-1–Ala-19. Position 142 (Gln-142) interacts with substrate. Catalysis depends on Asp-165, which acts as the Proton donor. Asp-186 functions as the Nucleophile in the catalytic mechanism. Substrate contacts are provided by Arg-246 and Trp-248. An N-linked (GlcNAc...) asparagine glycan is attached at Asn-285.

The protein belongs to the pectinesterase family.

Its subcellular location is the secreted. It catalyses the reaction [(1-&gt;4)-alpha-D-galacturonosyl methyl ester](n) + n H2O = [(1-&gt;4)-alpha-D-galacturonosyl](n) + n methanol + n H(+). Its pathway is glycan metabolism; pectin degradation; 2-dehydro-3-deoxy-D-gluconate from pectin: step 1/5. Involved in maceration and soft-rotting of plant tissue. The protein is Probable pectinesterase A (pmeA) of Aspergillus oryzae (strain ATCC 42149 / RIB 40) (Yellow koji mold).